The following is a 516-amino-acid chain: Exodeoxyribonuclease 7 large subunit (516 aa).

Belongs to the XseA family. As to quaternary structure, heterooligomer composed of large and small subunits.

The protein resides in the cytoplasm. The enzyme catalyses Exonucleolytic cleavage in either 5'- to 3'- or 3'- to 5'-direction to yield nucleoside 5'-phosphates.. Functionally, bidirectionally degrades single-stranded DNA into large acid-insoluble oligonucleotides, which are then degraded further into small acid-soluble oligonucleotides. This is Exodeoxyribonuclease 7 large subunit from Chlamydia trachomatis serovar L2 (strain ATCC VR-902B / DSM 19102 / 434/Bu).